The following is a 462-amino-acid chain: UDP-N-acetylmuramate--L-alanine ligase (462 aa).

112 to 118 (GTHGKTT) lines the ATP pocket.

It belongs to the MurCDEF family.

It localises to the cytoplasm. The enzyme catalyses UDP-N-acetyl-alpha-D-muramate + L-alanine + ATP = UDP-N-acetyl-alpha-D-muramoyl-L-alanine + ADP + phosphate + H(+). It functions in the pathway cell wall biogenesis; peptidoglycan biosynthesis. Functionally, cell wall formation. The protein is UDP-N-acetylmuramate--L-alanine ligase of Geobacter sulfurreducens (strain ATCC 51573 / DSM 12127 / PCA).